A 313-amino-acid polypeptide reads, in one-letter code: tRNA dimethylallyltransferase (313 aa).

11-18 lines the ATP pocket; sequence GPTAGGKT. Position 13-18 (13-18) interacts with substrate; the sequence is TAGGKT. 3 interaction with substrate tRNA regions span residues 36–39, 160–164, and 243–248; these read DSAL, QRIGR, and RCVGYR.

It belongs to the IPP transferase family. In terms of assembly, monomer. It depends on Mg(2+) as a cofactor.

The catalysed reaction is adenosine(37) in tRNA + dimethylallyl diphosphate = N(6)-dimethylallyladenosine(37) in tRNA + diphosphate. In terms of biological role, catalyzes the transfer of a dimethylallyl group onto the adenine at position 37 in tRNAs that read codons beginning with uridine, leading to the formation of N6-(dimethylallyl)adenosine (i(6)A). The sequence is that of tRNA dimethylallyltransferase from Neisseria meningitidis serogroup B (strain ATCC BAA-335 / MC58).